We begin with the raw amino-acid sequence, 889 residues long: Inter-alpha-trypsin inhibitor heavy chain H3 (889 aa).

A signal peptide spans 1 to 21 (MRTMWWPCLVLALLSGLETSG). A propeptide spanning residues 22–33 (FPRSPLQLLGKR) is cleaved from the precursor. The 130-residue stretch at 29-158 (LLGKRSLPEG…KVTFELTYEE (130 aa)) folds into the VIT domain. N91 is a glycosylation site (N-linked (GlcNAc...) asparagine). Residues 284–467 (NIVFVIDVSG…LQLQGFYEEV (184 aa)) enclose the VWFA domain. N580 carries N-linked (GlcNAc...) asparagine glycosylation. D649 is subject to Aspartate 1-(chondroitin 4-sulfate)-ester. Positions 650 to 889 (PHFIIQIPGK…HTDYIVPSLF (240 aa)) are excised as a propeptide.

The protein belongs to the ITIH family. I-alpha-I plasma protease inhibitors are assembled from one or two heavy chains (HC) and one light chain, bikunin. Pre-alpha-inhibitor (P-alpha-I) is composed of ITIH3/HC3 and bikunin. Post-translationally, heavy chains are linked to bikunin via chondroitin 4-sulfate esterified to the alpha-carboxyl of the C-terminal aspartate after propeptide cleavage. In terms of tissue distribution, expressed in both liver and brain.

It is found in the secreted. In terms of biological role, may act as a carrier of hyaluronan in serum or as a binding protein between hyaluronan and other matrix protein, including those on cell surfaces in tissues to regulate the localization, synthesis and degradation of hyaluronan which are essential to cells undergoing biological processes. The sequence is that of Inter-alpha-trypsin inhibitor heavy chain H3 (Itih3) from Mus musculus (Mouse).